The sequence spans 498 residues: E3 ubiquitin-protein ligase TRIM22 (498 aa).

The segment at 15–60 adopts an RING-type zinc-finger fold; the sequence is CPICLELLTEPLSLDCGHSFCQACITAKIKESVIISRGESSCPVCQ. A B box-type zinc finger spans residues 92 to 133; sequence QKRDVCEHHGKKLQIFCKEDGKVICWVCELSQEHQGHQTFRI. Cys97, His100, Cys119, and His125 together coordinate Zn(2+). Residues 132–248 adopt a coiled-coil conformation; the sequence is RINEVVKECQ…RRLRGSSVEM (117 aa). The Nuclear localization signal signature appears at 257–275; sequence KRSESWTLKKPKSVSKKLK. The 216-residue stretch at 283–498 folds into the B30.2/SPRY domain; that stretch reads LSGMLQVLKE…VPMTVCPPSS (216 aa).

Belongs to the TRIM/RBCC family. In terms of assembly, homotrimer. (Microbial infection) Interacts with HIV-1 Gag polyprotein; this interaction seems to reduce gag production or virus budding. As to quaternary structure, (Microbial infection) Interacts with EMCV protease 3C; this interaction leads to viral protease ubiquitination. In terms of processing, auto-ubiquitinated. In terms of tissue distribution, strongly expressed in peripheral blood leukocytes, spleen, thymus, and ovary. Expressed at basal levels in other tissues.

The protein localises to the cytoplasm. Its subcellular location is the nucleus. The protein resides in the nucleus speckle. It localises to the cajal body. It catalyses the reaction S-ubiquitinyl-[E2 ubiquitin-conjugating enzyme]-L-cysteine + [acceptor protein]-L-lysine = [E2 ubiquitin-conjugating enzyme]-L-cysteine + N(6)-ubiquitinyl-[acceptor protein]-L-lysine.. Its pathway is protein modification; protein ubiquitination. In terms of biological role, interferon-induced E3 ubiquitin ligase that plays important roles in innate and adaptive immunity. Restricts the replication of many viruses including HIV-1, encephalomyocarditis virus (EMCV), hepatitis B virus (HBV), hepatitis C virus (HCV) or Zika virus (ZIKV). Mechanistically, negatively regulates HCV replication by promoting ubiquitination and subsequent degradation of viral NS5A. Also acts by promoting the degradation of Zika virus NS1 and NS3 proteins through proteasomal degradation. Acts as a suppressor of basal HIV-1 LTR-driven transcription by preventing Sp1 binding to the HIV-1 promoter. Also plays a role in antiviral immunity by co-regulating together with NT5C2 the RIGI/NF-kappa-B pathway by promoting 'Lys-63'-linked ubiquitination of RIGI, while NT5C2 is responsible for 'Lys-48'-linked ubiquitination of RIGI. Participates in adaptive immunity by suppressing the amount of MHC class II protein in a negative feedback manner in order to limit the extent of MHC class II induction. The sequence is that of E3 ubiquitin-protein ligase TRIM22 (TRIM22) from Homo sapiens (Human).